Consider the following 547-residue polypeptide: MELCVISTTTTVKAINPFLPSITRRVSSRLFQSDSVLQFGGRLKKPISRPLDMSCVSRKIGFFGDFMSHGGNFRLFAAASPAVETSVKEDKLPADLKVTETVQANSSVKLSVEVPEIVCEDCYQRVLTEFMKLSKVPGFRPKTRVPENIIVGFVGRQYVLRATVESILKRTLPHAMESVTGRALKDSIQIVSSFPDMEKAYSKLKTLSYEVVVDVVPELKWNPEDGYKNMKVVVELGDEIDAKKACERQLRQKYKSLGALKIVTERGLQVGDLAVVDISATTIDEDGSTGQAIPDAESKGFHFDTEEGNRLLPGFLDAIIGIRAGESKSFTLVFPESWKQESLRGQRAQFTVDCKELFYRDLPTLDDSLADKLLPGCTTLKEVEETLAKRCQEMEQEAKEQATDNAILEQIRKMVEVEIPQSLFEEQGRQFYGARLLEIQGNMKLNEDQLASLSSQKAVNEFLETQRESITNIIKQNIAVGDIFKRENLEFSTDELVKEVENSISEFKKHKQEFDEERVKDQVQEILEGAKVLEWLKDRAEIQYITR.

The transit peptide at 1–77 (MELCVISTTT…SHGGNFRLFA (77 aa)) directs the protein to the chloroplast. Ala78 carries the N-acetylalanine modification. Residues 271–366 (GDLAVVDISA…LFYRDLPTLD (96 aa)) form the PPIase FKBP-type domain.

This sequence belongs to the FKBP-type PPIase family. Tig subfamily.

It is found in the plastid. Its subcellular location is the chloroplast. It carries out the reaction [protein]-peptidylproline (omega=180) = [protein]-peptidylproline (omega=0). Its function is as follows. Involved in protein export. Acts as a chaperone by maintaining the newly synthesized protein in an open conformation. Functions as a peptidyl-prolyl cis-trans isomerase. This chain is Trigger factor-like protein TIG, Chloroplastic (TIG), found in Arabidopsis thaliana (Mouse-ear cress).